Consider the following 137-residue polypeptide: Histone H2B (137 aa).

Residues 1-10 show a composition bias toward basic and acidic residues; that stretch reads MAPKAADKKP. A disordered region spans residues 1–46; that stretch reads MAPKAADKKPASKAPATASKAPEKKDAGKKTAASGDKKKRSKSRKE. N6-acetyllysine; alternate occurs at positions 8 and 9. Glycyl lysine isopeptide (Lys-Gly) (interchain with G-Cter in SUMO); alternate cross-links involve residues K8 and K9. A Phosphoserine modification is found at S12. An N6-acetyllysine modification is found at K13. K24 carries the post-translational modification N6-acetyllysine; alternate. Residue K24 forms a Glycyl lysine isopeptide (Lys-Gly) (interchain with G-Cter in SUMO); alternate linkage. K25 participates in a covalent cross-link: Glycyl lysine isopeptide (Lys-Gly) (interchain with G-Cter in SUMO). K131 is covalently cross-linked (Glycyl lysine isopeptide (Lys-Gly) (interchain with G-Cter in ubiquitin)).

This sequence belongs to the histone H2B family. As to quaternary structure, the nucleosome is a histone octamer containing two molecules each of H2A, H2B, H3 and H4 assembled in one H3-H4 heterotetramer and two H2A-H2B heterodimers. The octamer wraps approximately 147 bp of DNA. In terms of processing, monoubiquitinated by the UBC2-BRE1 complex to form H2BK123ub1. H2BK123ub1 gives a specific tag for epigenetic transcriptional activation and is also prerequisite for H3K4me and H3K79me formation. H2BK123ub1 also modulates the formation of double-strand breaks during meiosis and is a prerequisite for DNA-damage checkpoint activation. Post-translationally, phosphorylated to form H2BS10ph during progression through meiotic prophase. May be correlated with chromosome condensation. Acetylated by GCN5 to form H2BK11ac and H2BK16ac. H2BK16ac can also be formed by ESA1. Acetylation of N-terminal lysines and particularly formation of H2BK11acK16ac has a positive effect on transcription. In terms of processing, sumoylation to form H2BK6su or H2BK7su, and probably also H2BK16su or H2BK17su, occurs preferentially near the telomeres and represses gene transcription.

Its subcellular location is the nucleus. The protein resides in the chromosome. In terms of biological role, core component of nucleosome. Nucleosomes wrap and compact DNA into chromatin, limiting DNA accessibility to the cellular machineries which require DNA as a template. Histones thereby play a central role in transcription regulation, DNA repair, DNA replication and chromosomal stability. DNA accessibility is regulated via a complex set of post-translational modifications of histones, also called histone code, and nucleosome remodeling. The chain is Histone H2B (HTB1) from Gibberella zeae (strain ATCC MYA-4620 / CBS 123657 / FGSC 9075 / NRRL 31084 / PH-1) (Wheat head blight fungus).